A 660-amino-acid chain; its full sequence is Genome-linked protein precursor (660 aa).

The signal sequence occupies residues 1–25 (MALLGIKLMTLVFAAWLSCCHSSSA). 2 helical membrane passes run 131-151 (AVGMLLMIIIWIWSSIFLVVY) and 165-185 (AVCVGFLIFCTICAFRLISWI). Residues 224–416 (VEGYKPFIIP…GLTSPDFKFE (193 aa)) enclose the Peptidase S39 domain. Catalysis depends on for protease activity residues His-272, Asp-304, and Ser-373. Disordered regions lie at residues 463–490 (EEESESDDERGKVVPPAKPSNYGEGCPP) and 595–660 (TKAP…AWVR).

This sequence belongs to the peptidase S39B family.

It is found in the host membrane. Precursor from which the VPg molecule is probably released at the onset of the RNA synthesis. Essential for virus replication. This Euphorbia pulcherrima (Poinsettia) protein is Genome-linked protein precursor.